A 193-amino-acid chain; its full sequence is Recombination protein RecR (193 aa).

Residues 61–76 (CTSCNALSESEVCEIC) form a C4-type zinc finger. A Toprim domain is found at 84 to 170 (SQLCMVLHPR…TFTKIAQGVP (87 aa)).

This sequence belongs to the RecR family.

May play a role in DNA repair. It seems to be involved in an RecBC-independent recombinational process of DNA repair. It may act with RecF and RecO. This Helicobacter pylori (strain HPAG1) protein is Recombination protein RecR.